The primary structure comprises 314 residues: Inositol oxygenase 5 (314 aa).

Substrate contacts are provided by residues Arg54 and 112-114; that span reads DES. The Fe cation site is built by His125, His150, and Asp151. Substrate is bound by residues Lys154 and 171-172; that span reads GD. Residues His223, His249, and Asp282 each coordinate Fe cation. Position 249–250 (249–250) interacts with substrate; the sequence is HS.

Belongs to the myo-inositol oxygenase family. Requires Fe cation as cofactor. In terms of tissue distribution, expressed in flowers and siliques.

It is found in the cytoplasm. It carries out the reaction myo-inositol + O2 = D-glucuronate + H2O + H(+). It functions in the pathway polyol metabolism; myo-inositol degradation into D-glucuronate; D-glucuronate from myo-inositol: step 1/1. Functionally, involved in the biosynthesis of UDP-glucuronic acid (UDP-GlcA), providing nucleotide sugars for cell-wall polymers. May be also involved in plant ascorbate biosynthesis. This Arabidopsis thaliana (Mouse-ear cress) protein is Inositol oxygenase 5 (MIOX5).